The chain runs to 283 residues: Pantothenate synthetase (283 aa).

30-37 (MGALHEGH) serves as a coordination point for ATP. Histidine 37 functions as the Proton donor in the catalytic mechanism. (R)-pantoate is bound at residue glutamine 61. Glutamine 61 lines the beta-alanine pocket. 149-152 (GEKD) contributes to the ATP binding site. (R)-pantoate is bound at residue glutamine 155. ATP-binding positions include leucine 178 and 186–189 (RSSR).

It belongs to the pantothenate synthetase family. As to quaternary structure, homodimer.

It localises to the cytoplasm. It catalyses the reaction (R)-pantoate + beta-alanine + ATP = (R)-pantothenate + AMP + diphosphate + H(+). The protein operates within cofactor biosynthesis; (R)-pantothenate biosynthesis; (R)-pantothenate from (R)-pantoate and beta-alanine: step 1/1. In terms of biological role, catalyzes the condensation of pantoate with beta-alanine in an ATP-dependent reaction via a pantoyl-adenylate intermediate. This Christiangramia forsetii (strain DSM 17595 / CGMCC 1.15422 / KT0803) (Gramella forsetii) protein is Pantothenate synthetase.